Here is a 310-residue protein sequence, read N- to C-terminus: N-acetylmuramic acid 6-phosphate etherase (310 aa).

The 164-residue stretch at 64 to 227 folds into the SIS domain; sequence ITARLKSKGR…STSVMIKLGK (164 aa). Glutamate 92 serves as the catalytic Proton donor. Glutamate 123 is an active-site residue.

The protein belongs to the GCKR-like family. MurNAc-6-P etherase subfamily. As to quaternary structure, homodimer.

The enzyme catalyses N-acetyl-D-muramate 6-phosphate + H2O = N-acetyl-D-glucosamine 6-phosphate + (R)-lactate. It participates in amino-sugar metabolism; N-acetylmuramate degradation. In terms of biological role, specifically catalyzes the cleavage of the D-lactyl ether substituent of MurNAc 6-phosphate, producing GlcNAc 6-phosphate and D-lactate. This chain is N-acetylmuramic acid 6-phosphate etherase, found in Prochlorococcus marinus (strain NATL1A).